Reading from the N-terminus, the 145-residue chain is Transcription antitermination protein NusB (145 aa).

Belongs to the NusB family.

Its function is as follows. Involved in transcription antitermination. Required for transcription of ribosomal RNA (rRNA) genes. Binds specifically to the boxA antiterminator sequence of the ribosomal RNA (rrn) operons. The chain is Transcription antitermination protein NusB from Acetivibrio thermocellus (strain ATCC 27405 / DSM 1237 / JCM 9322 / NBRC 103400 / NCIMB 10682 / NRRL B-4536 / VPI 7372) (Clostridium thermocellum).